The chain runs to 394 residues: Protein TsgA homolog (394 aa).

12 consecutive transmembrane segments (helical) span residues 11-31 (WISF…GMVM), 51-71 (FLNT…EIIP), 76-96 (LVFG…GHNL), 101-121 (ACMF…TFLI), 134-154 (LLFT…IAAT), 160-180 (VAWY…FILT), 206-226 (IGVL…LGFI), 246-266 (GLVS…SVAL), 274-294 (IVTV…SSQQ), 297-317 (MLSM…TTLI), 334-354 (FILT…GPIV), and 363-383 (LATA…LGFV).

It belongs to the major facilitator superfamily. TsgA family.

It localises to the cell inner membrane. The chain is Protein TsgA homolog from Edwardsiella ictaluri (strain 93-146).